Here is a 336-residue protein sequence, read N- to C-terminus: Holliday junction branch migration complex subunit RuvB (336 aa).

The segment at 4-184 is large ATPase domain (RuvB-L); sequence ADRLVSADSS…FGIVQRLEFY (181 aa). Residues I23, R24, G65, K68, T69, T70, 131–133, R174, Y184, and R221 contribute to the ATP site; that span reads EDY. Residue T69 participates in Mg(2+) binding. Residues 185 to 255 are small ATPAse domain (RuvB-S); it reads QIPDLQHIVS…IAAQALDMLN (71 aa). A head domain (RuvB-H) region spans residues 258-336; sequence AEGFDYMDRK…HFGITPPEMP (79 aa). 3 residues coordinate DNA: R294, R313, and R318.

Belongs to the RuvB family. In terms of assembly, homohexamer. Forms an RuvA(8)-RuvB(12)-Holliday junction (HJ) complex. HJ DNA is sandwiched between 2 RuvA tetramers; dsDNA enters through RuvA and exits via RuvB. An RuvB hexamer assembles on each DNA strand where it exits the tetramer. Each RuvB hexamer is contacted by two RuvA subunits (via domain III) on 2 adjacent RuvB subunits; this complex drives branch migration. In the full resolvosome a probable DNA-RuvA(4)-RuvB(12)-RuvC(2) complex forms which resolves the HJ.

It localises to the cytoplasm. It catalyses the reaction ATP + H2O = ADP + phosphate + H(+). In terms of biological role, the RuvA-RuvB-RuvC complex processes Holliday junction (HJ) DNA during genetic recombination and DNA repair, while the RuvA-RuvB complex plays an important role in the rescue of blocked DNA replication forks via replication fork reversal (RFR). RuvA specifically binds to HJ cruciform DNA, conferring on it an open structure. The RuvB hexamer acts as an ATP-dependent pump, pulling dsDNA into and through the RuvAB complex. RuvB forms 2 homohexamers on either side of HJ DNA bound by 1 or 2 RuvA tetramers; 4 subunits per hexamer contact DNA at a time. Coordinated motions by a converter formed by DNA-disengaged RuvB subunits stimulates ATP hydrolysis and nucleotide exchange. Immobilization of the converter enables RuvB to convert the ATP-contained energy into a lever motion, pulling 2 nucleotides of DNA out of the RuvA tetramer per ATP hydrolyzed, thus driving DNA branch migration. The RuvB motors rotate together with the DNA substrate, which together with the progressing nucleotide cycle form the mechanistic basis for DNA recombination by continuous HJ branch migration. Branch migration allows RuvC to scan DNA until it finds its consensus sequence, where it cleaves and resolves cruciform DNA. The sequence is that of Holliday junction branch migration complex subunit RuvB from Klebsiella pneumoniae (strain 342).